A 344-amino-acid polypeptide reads, in one-letter code: Interferon gamma receptor 1-like (344 aa).

An N-terminal signal peptide occupies residues 1 to 22 (MSKHAVVQFGVVYALLFPGVFG). Over 23 to 229 (FVPSPTNVSV…QPTPETDKTG (207 aa)) the chain is Extracellular. In terms of domain architecture, Fibronectin type-III spans 24 to 102 (VPSPTNVSVV…TAHDGQEKSE (79 aa)). Asn-29, Asn-44, Asn-132, and Asn-189 each carry an N-linked (GlcNAc...) asparagine glycan. A helical membrane pass occupies residues 230–250 (IIAALIGGATVVLFIIMGFVW). Residues 251-344 (LLWRKWSNIP…SSDYDRPKFL (94 aa)) are Cytoplasmic-facing. Positions 300–344 (TEEDQSVSARDDTGADPPVVSEEGMAGEDSQGLGCSSDYDRPKFL) are disordered.

Belongs to the type II cytokine receptor family. Highly expressed in brain. Also detected in spleen, heart, intestine, gill and kidney. In immune cell populations, detected at low levels in monocytes, peripheral blood leukocytes, splenocytes, neutrophils and mature macrophages.

It localises to the cell membrane. In terms of biological role, receptor which shows binding specificity for the cytokine ifng1 (interferon gamma 1). The chain is Interferon gamma receptor 1-like from Carassius auratus (Goldfish).